The primary structure comprises 75 residues: uncharacterized protein (75 aa).

This is an uncharacterized protein from Escherichia coli (Bacteriophage T4).